The primary structure comprises 828 residues: DNA topoisomerase 3 (828 aa).

Residues 4–149 (RILNVAEKPS…KFEFYRAHFS (146 aa)) form the Toprim domain. One can recognise a Topo IA-type catalytic domain in the interval 167-617 (NEKDSIAVDT…STIEKYKQLY (451 aa)). Tyr361 functions as the O-(5'-phospho-DNA)-tyrosine intermediate in the catalytic mechanism. The tract at residues 763–828 (QQQQQQQQQQ…SDRNNNNFIF (66 aa)) is disordered.

This sequence belongs to the type IA topoisomerase family.

The enzyme catalyses ATP-independent breakage of single-stranded DNA, followed by passage and rejoining.. Functionally, releases the supercoiling and torsional tension of DNA introduced during the DNA replication and transcription by transiently cleaving and rejoining one strand of the DNA duplex. Introduces a single-strand break via transesterification at a target site in duplex DNA. The scissile phosphodiester is attacked by the catalytic tyrosine of the enzyme, resulting in the formation of a DNA-(5'-phosphotyrosyl)-enzyme intermediate and the expulsion of a 3'-OH DNA strand. The free DNA strand than undergoes passage around the unbroken strand thus removing DNA supercoils. Finally, in the religation step, the DNA 3'-OH attacks the covalent intermediate to expel the active-site tyrosine and restore the DNA phosphodiester backbone. In Dictyostelium discoideum (Social amoeba), this protein is DNA topoisomerase 3 (top3).